We begin with the raw amino-acid sequence, 443 residues long: Sensor histidine protein kinase HK06 (443 aa).

The next 2 helical transmembrane spans lie at 16-36 (FAIL…TFPF) and 140-160 (ILLL…FVFS). The HAMP domain maps to 165 to 217 (KRLLNPLFYISEVTSKMQDLDDNIRFDESRKDEVGEVGKQINGMYEHLLKVIH). Residues 239–443 (GASHELKTPL…EHGMEFKISL (205 aa)) form the Histidine kinase domain. H242 carries the post-translational modification Phosphohistidine; by autocatalysis.

It is found in the cell membrane. It catalyses the reaction ATP + protein L-histidine = ADP + protein N-phospho-L-histidine.. Its function is as follows. Member of the two-component regulatory system HK06/RR06 involved in regulation of target genes, including choline-binding protein CbpA. Has been shown in one study to not be required for regulation of expression of choline-binding protein CbpA. This chain is Sensor histidine protein kinase HK06, found in Streptococcus pneumoniae serotype 2 (strain D39 / NCTC 7466).